The sequence spans 455 residues: Chromosomal replication initiator protein DnaA (455 aa).

The domain I, interacts with DnaA modulators stretch occupies residues 1–74 (MFNFEKFWQH…IQSAYGYAGV (74 aa)). The segment at 74–117 (VELLPVFQISEDSDTPERIVTPEPQHNLQTTPTRAPQREFAKDL) is domain II. The segment at 118-334 (KLNEKYTFDN…GALVKVQAYA (217 aa)) is domain III, AAA+ region. Residues Gly-162, Gly-164, Lys-165, and Thr-166 each contribute to the ATP site. Residues 335–455 (TIEKADIDIN…VFDLKQMLEH (121 aa)) are domain IV, binds dsDNA.

This sequence belongs to the DnaA family. As to quaternary structure, oligomerizes as a right-handed, spiral filament on DNA at oriC.

The protein localises to the cytoplasm. In terms of biological role, plays an essential role in the initiation and regulation of chromosomal replication. ATP-DnaA binds to the origin of replication (oriC) to initiate formation of the DNA replication initiation complex once per cell cycle. Binds the DnaA box (a 9 base pair repeat at the origin) and separates the double-stranded (ds)DNA. Forms a right-handed helical filament on oriC DNA; dsDNA binds to the exterior of the filament while single-stranded (ss)DNA is stabiized in the filament's interior. The ATP-DnaA-oriC complex binds and stabilizes one strand of the AT-rich DNA unwinding element (DUE), permitting loading of DNA polymerase. After initiation quickly degrades to an ADP-DnaA complex that is not apt for DNA replication. Binds acidic phospholipids. In Lactobacillus acidophilus (strain ATCC 700396 / NCK56 / N2 / NCFM), this protein is Chromosomal replication initiator protein DnaA.